A 347-amino-acid chain; its full sequence is Protein FAM50 homolog (347 aa).

A compositionally biased stretch (basic and acidic residues) spans 77–113 (EDIVREREKKLAQKKEEKDREKLKALEAKQAEKDRQR). Residues 77-142 (EDIVREREKK…EDEEEPLEIK (66 aa)) are disordered. The span at 123 to 138 (PEEDEESFDDEDEEEP) shows a compositional bias: acidic residues.

It belongs to the FAM50 family.

This Aedes aegypti (Yellowfever mosquito) protein is Protein FAM50 homolog.